We begin with the raw amino-acid sequence, 222 residues long: Thiamine-phosphate synthase (222 aa).

4-amino-2-methyl-5-(diphosphooxymethyl)pyrimidine is bound by residues 44 to 48 (QFREK) and asparagine 79. Aspartate 80 and aspartate 99 together coordinate Mg(2+). Serine 117 lines the 4-amino-2-methyl-5-(diphosphooxymethyl)pyrimidine pocket. Position 143 to 145 (143 to 145 (TET)) interacts with 2-[(2R,5Z)-2-carboxy-4-methylthiazol-5(2H)-ylidene]ethyl phosphate. Residue lysine 146 participates in 4-amino-2-methyl-5-(diphosphooxymethyl)pyrimidine binding. 2-[(2R,5Z)-2-carboxy-4-methylthiazol-5(2H)-ylidene]ethyl phosphate-binding positions include glycine 175 and 195-196 (IS).

This sequence belongs to the thiamine-phosphate synthase family. Monomer. It depends on Mg(2+) as a cofactor.

It carries out the reaction 2-[(2R,5Z)-2-carboxy-4-methylthiazol-5(2H)-ylidene]ethyl phosphate + 4-amino-2-methyl-5-(diphosphooxymethyl)pyrimidine + 2 H(+) = thiamine phosphate + CO2 + diphosphate. It catalyses the reaction 2-(2-carboxy-4-methylthiazol-5-yl)ethyl phosphate + 4-amino-2-methyl-5-(diphosphooxymethyl)pyrimidine + 2 H(+) = thiamine phosphate + CO2 + diphosphate. The catalysed reaction is 4-methyl-5-(2-phosphooxyethyl)-thiazole + 4-amino-2-methyl-5-(diphosphooxymethyl)pyrimidine + H(+) = thiamine phosphate + diphosphate. Its pathway is cofactor biosynthesis; thiamine diphosphate biosynthesis; thiamine phosphate from 4-amino-2-methyl-5-diphosphomethylpyrimidine and 4-methyl-5-(2-phosphoethyl)-thiazole: step 1/1. Condenses 4-methyl-5-(beta-hydroxyethyl)thiazole monophosphate (THZ-P) and 2-methyl-4-amino-5-hydroxymethyl pyrimidine pyrophosphate (HMP-PP) to form thiamine monophosphate (TMP). Is also able to use the 2-methoxy analog MeO-HMP-PP, as substrate in vitro, but not the 2-trifluoromethyl analog CF(3)-HMP-PP. The protein is Thiamine-phosphate synthase (thiE) of Bacillus subtilis (strain 168).